Reading from the N-terminus, the 84-residue chain is Defensin-like protein 199 (84 aa).

Positions 1-24 are cleaved as a signal peptide; the sequence is MAITMRTLVAFVFTIFFIISFVHS. 4 cysteine pairs are disulfide-bonded: Cys40–Cys80, Cys47–Cys72, Cys56–Cys78, and Cys60–Cys79.

Belongs to the DEFL family.

Its subcellular location is the secreted. This Arabidopsis thaliana (Mouse-ear cress) protein is Defensin-like protein 199.